The chain runs to 294 residues: Aquaporin-B (294 aa).

Residues 1–31 (MSLKRSDDYQDLEEGIAMEDGGNIKDEEEKP) form a disordered region. Residues 1 to 42 (MSLKRSDDYQDLEEGIAMEDGGNIKDEEEKPLDPIEEQNKKR) are Cytoplasmic-facing. The segment covering 22–31 (GNIKDEEEKP) has biased composition (basic and acidic residues). A helical membrane pass occupies residues 43-63 (WVLIRAVLGELLCTFLFVYVL). At 64–79 (CATSANFIRLGSPPNP) the chain is on the extracellular side. The O-linked (GalNAc...) serine glycan is linked to S75. Residues 80–100 (VVGGLSTGFAAVALIYSFADV) traverse the membrane as a helical segment. Topologically, residues 101 to 123 (SGAHFNPAVTFATCVTRKTSITK) are cytoplasmic. Positions 106 to 108 (NPA) match the NPA 1 motif. A helical membrane pass occupies residues 124 to 144 (GLMYVGAQLVGSVLASLILLA). The Extracellular portion of the chain corresponds to 145–172 (TFPGNFPGDKNAASAVAIAPSTDANIGN). Residues 173 to 193 (AFLTELVLTFILVYVIFAVAF) traverse the membrane as a helical segment. Over 194 to 224 (DTVDNSVKTKVVGKSSSNNLTIYTTSGQTKA) the chain is Cytoplasmic. Residues 208 to 219 (SSSNNLTIYTTS) form a required for water permeability region. The chain crosses the membrane as a helical span at residues 225 to 245 (GFAPIAIGFTLGFLCFLGGSV). Residues 246–268 (SGGAFNPARVFGTALVGNNWTRH) lie on the Extracellular side of the membrane. Positions 251 to 253 (NPA) match the NPA 2 motif. A helical membrane pass occupies residues 269-289 (WMYWIADFLGAGLAGFAQKFF). Topologically, residues 290–294 (SSTHK) are cytoplasmic.

This sequence belongs to the MIP/aquaporin (TC 1.A.8) family. Glycosylated and non-glycosylated forms exist throughout all developmental stages.

Its subcellular location is the cell membrane. It is found in the cytoplasmic vesicle. Functionally, putatively gated water-specific channel, requiring a cysteine residue within the channel. Impermeable to water, glycerol and urea when expressed in Xenopus oocytes. Not regulated by pH; channels remain impermeable to water at pH 7.4 and 5.2. This chain is Aquaporin-B, found in Dictyostelium discoideum (Social amoeba).